An 886-amino-acid chain; its full sequence is Alanine--tRNA ligase (886 aa).

Residues H564, H568, C666, and H670 each coordinate Zn(2+).

This sequence belongs to the class-II aminoacyl-tRNA synthetase family. Zn(2+) serves as cofactor.

Its subcellular location is the cytoplasm. It carries out the reaction tRNA(Ala) + L-alanine + ATP = L-alanyl-tRNA(Ala) + AMP + diphosphate. Functionally, catalyzes the attachment of alanine to tRNA(Ala) in a two-step reaction: alanine is first activated by ATP to form Ala-AMP and then transferred to the acceptor end of tRNA(Ala). Also edits incorrectly charged Ser-tRNA(Ala) and Gly-tRNA(Ala) via its editing domain. This chain is Alanine--tRNA ligase, found in Prochlorococcus marinus (strain AS9601).